The chain runs to 352 residues: Iron-sulfur cluster carrier protein (352 aa).

114–121 (GKGGVGKS) serves as a coordination point for ATP.

The protein belongs to the Mrp/NBP35 ATP-binding proteins family. Homodimer. Interacts with BrxC.

In terms of biological role, binds and transfers iron-sulfur (Fe-S) clusters to target apoproteins. Can hydrolyze ATP. Its function is as follows. Negatively regulates the expression of hpr/scoC. The effect on hpr/scoC may be indirect. In Bacillus subtilis (strain 168), this protein is Iron-sulfur cluster carrier protein (salA).